The primary structure comprises 567 residues: Type II secretion system protein E (567 aa).

Residue 325–332 (GPTGSGKT) coordinates ATP.

Belongs to the GSP E family. In terms of assembly, forms homooligomers; most probably hexamers. Interacts with XpsL/GspL.

Its subcellular location is the cell inner membrane. It carries out the reaction ATP + H2O + cellular proteinSide 1 = ADP + phosphate + cellular proteinSide 2.. Its function is as follows. ATPase component of the type II secretion system required for the energy-dependent secretion of extracellular factors such as proteases and toxins from the periplasm. Acts as a molecular motor to provide the energy that is required for assembly of the pseudopilus and the extrusion of substrates generated in the cytoplasm. The polypeptide is Type II secretion system protein E (xpsE) (Xanthomonas campestris pv. campestris (strain ATCC 33913 / DSM 3586 / NCPPB 528 / LMG 568 / P 25)).